The chain runs to 115 residues: uncharacterized protein (115 aa).

This sequence belongs to the herpesviridae BLRF2 family.

This is an uncharacterized protein from Saimiriine herpesvirus 2 (strain 11) (SaHV-2).